Reading from the N-terminus, the 124-residue chain is Membrane magnesium transporter 2 (124 aa).

A topological domain (cytoplasmic) is located at residue M1. The chain crosses the membrane as a helical span at residues V2–F22. Residues S23–D44 are Lumenal-facing. Residues I45–G65 form a helical membrane-spanning segment. Over D66 to F124 the chain is Cytoplasmic.

The protein belongs to the membrane magnesium transporter (TC 1.A.67) family.

It localises to the golgi apparatus membrane. The protein localises to the early endosome membrane. In terms of biological role, mediates Mg(2+) transport. In Rattus norvegicus (Rat), this protein is Membrane magnesium transporter 2.